Here is a 551-residue protein sequence, read N- to C-terminus: Eukaryotic translation initiation factor 3 subunit D-2 (551 aa).

The interval 108-152 (RTRGRTGRGTPNIASLGGSTAGGATASSTKYGKGRHTRNTQNVGR) is disordered. The span at 115-136 (RGTPNIASLGGSTAGGATASST) shows a compositional bias: low complexity. The interval 290–304 (QFDLLTVNETSVEPP) is RNA gate. The disordered stretch occupies residues 527–551 (PENAFDSDRDEEEESSEPLSNSNDN).

This sequence belongs to the eIF-3 subunit D family. Component of the eukaryotic translation initiation factor 3 (eIF-3) complex. The eIF-3 complex interacts with pix.

Its subcellular location is the cytoplasm. MRNA cap-binding component of the eukaryotic translation initiation factor 3 (eIF-3) complex, which is involved in protein synthesis of a specialized repertoire of mRNAs and, together with other initiation factors, stimulates binding of mRNA and methionyl-tRNAi to the 40S ribosome. The eIF-3 complex specifically targets and initiates translation of a subset of mRNAs involved in cell proliferation. In the eIF-3 complex, eif3d specifically recognizes and binds the 7-methylguanosine cap of a subset of mRNAs. In Drosophila simulans (Fruit fly), this protein is Eukaryotic translation initiation factor 3 subunit D-2.